The primary structure comprises 606 residues: Ribonucleoprotein PTB-binding 1 (606 aa).

Positions 1–41 (MAADVSVTHRPPLSPKSGAEVEAGDAAERRAPEEELPPLDP) are disordered. The residue at position 2 (Ala2) is an N-acetylalanine. 2 positions are modified to phosphoserine: Ser6 and Ser14. A Nuclear localization signal motif is present at residues 45-60 (RKRLEHTERQFRNRRK). RRM domains lie at 59–130 (RKIL…LQPT), 132–210 (ALLC…WTDA), and 221–299 (RCLC…FCAP). The tract at residues 307–395 (LAALIAAQAT…QTQGQKKPGI (89 aa)) is interaction with PTBP1. The disordered stretch occupies residues 391-474 (KKPGILGDSP…PPAPVGLRGS (84 aa)). The span at 453 to 462 (LGLGPPAAQL) shows a compositional bias: low complexity. The residue at position 463 (Thr463) is a Phosphothreonine. Ser474 carries the phosphoserine modification. Phosphothreonine is present on Pro488. Residues 519–564 (GLLGLSPGPNGHSHLLKVRAGGGDMQGWEAPAPQRPLTRPALPSVS) are disordered. Phosphoserine is present on residues Ser562 and His567. A disordered region spans residues 579 to 606 (CPRPSPAQKAAMWASTPRASAATTRTPT). The span at 592 to 606 (ASTPRASAATTRTPT) shows a compositional bias: low complexity.

As to quaternary structure, interacts with PTBP1, RAVER2, VCL and ACTN1. Part of a complex containing RAVER1, VCL and ACTN1.

It is found in the nucleus. The protein resides in the cytoplasm. Cooperates with PTBP1 to modulate regulated alternative splicing events. Promotes exon skipping. Cooperates with PTBP1 to modulate switching between mutually exclusive exons during maturation of the TPM1 pre-mRNA. In Homo sapiens (Human), this protein is Ribonucleoprotein PTB-binding 1 (RAVER1).